The following is a 287-amino-acid chain: Ribosomal RNA small subunit methyltransferase I (287 aa).

It belongs to the methyltransferase superfamily. RsmI family.

It is found in the cytoplasm. The enzyme catalyses cytidine(1402) in 16S rRNA + S-adenosyl-L-methionine = 2'-O-methylcytidine(1402) in 16S rRNA + S-adenosyl-L-homocysteine + H(+). In terms of biological role, catalyzes the 2'-O-methylation of the ribose of cytidine 1402 (C1402) in 16S rRNA. This chain is Ribosomal RNA small subunit methyltransferase I, found in Streptococcus pyogenes serotype M18 (strain MGAS8232).